Consider the following 160-residue polypeptide: Ribosomal RNA large subunit methyltransferase H (160 aa).

Residues Leu-76, Gly-108, and Leu-127–Trp-132 contribute to the S-adenosyl-L-methionine site.

The protein belongs to the RNA methyltransferase RlmH family. As to quaternary structure, homodimer.

It is found in the cytoplasm. It catalyses the reaction pseudouridine(1915) in 23S rRNA + S-adenosyl-L-methionine = N(3)-methylpseudouridine(1915) in 23S rRNA + S-adenosyl-L-homocysteine + H(+). Functionally, specifically methylates the pseudouridine at position 1915 (m3Psi1915) in 23S rRNA. This Rhizobium etli (strain CIAT 652) protein is Ribosomal RNA large subunit methyltransferase H.